Here is a 309-residue protein sequence, read N- to C-terminus: Elongation factor Ts (309 aa).

The interval 82 to 85 (TDFV) is involved in Mg(2+) ion dislocation from EF-Tu.

The protein belongs to the EF-Ts family.

Its subcellular location is the cytoplasm. Its function is as follows. Associates with the EF-Tu.GDP complex and induces the exchange of GDP to GTP. It remains bound to the aminoacyl-tRNA.EF-Tu.GTP complex up to the GTP hydrolysis stage on the ribosome. The sequence is that of Elongation factor Ts from Rickettsia rickettsii (strain Iowa).